We begin with the raw amino-acid sequence, 267 residues long: Eukaryotic translation initiation factor 3 subunit K (267 aa).

The PCI domain occupies 46-233 (FDCYANLALL…EARSEVKSER (188 aa)).

This sequence belongs to the eIF-3 subunit K family. In terms of assembly, component of the eukaryotic translation initiation factor 3 (eIF-3) complex.

Its subcellular location is the cytoplasm. Its function is as follows. Component of the eukaryotic translation initiation factor 3 (eIF-3) complex, which is involved in protein synthesis of a specialized repertoire of mRNAs and, together with other initiation factors, stimulates binding of mRNA and methionyl-tRNAi to the 40S ribosome. The eIF-3 complex specifically targets and initiates translation of a subset of mRNAs involved in cell proliferation. This is Eukaryotic translation initiation factor 3 subunit K from Aspergillus niger (strain ATCC MYA-4892 / CBS 513.88 / FGSC A1513).